The sequence spans 63 residues: Large ribosomal subunit protein uL30 (63 aa).

The protein belongs to the universal ribosomal protein uL30 family. Part of the 50S ribosomal subunit.

This Xylella fastidiosa (strain M23) protein is Large ribosomal subunit protein uL30.